Here is a 297-residue protein sequence, read N- to C-terminus: Pyridoxal 5'-phosphate synthase subunit SNZ1 (297 aa).

D23 serves as a coordination point for D-ribose 5-phosphate. The active-site Schiff-base intermediate with D-ribose 5-phosphate is K80. Residue G152 coordinates D-ribose 5-phosphate. Residue R164 coordinates D-glyceraldehyde 3-phosphate. D-ribose 5-phosphate is bound by residues G214 and 235–236 (GS).

Belongs to the PdxS/SNZ family. As to quaternary structure, homohexamer. Interacts with AIM18.

The enzyme catalyses aldehydo-D-ribose 5-phosphate + D-glyceraldehyde 3-phosphate + L-glutamine = pyridoxal 5'-phosphate + L-glutamate + phosphate + 3 H2O + H(+). It functions in the pathway cofactor biosynthesis; pyridoxal 5'-phosphate biosynthesis. Functionally, catalyzes the formation of pyridoxal 5'-phosphate from ribose 5-phosphate (RBP), glyceraldehyde 3-phosphate (G3P) and ammonia. The ammonia is provided by a SNO isoform. Can also use ribulose 5-phosphate and dihydroxyacetone phosphate as substrates, resulting from enzyme-catalyzed isomerization of RBP and G3P, respectively. This Saccharomyces cerevisiae (strain ATCC 204508 / S288c) (Baker's yeast) protein is Pyridoxal 5'-phosphate synthase subunit SNZ1 (SNZ1).